A 267-amino-acid polypeptide reads, in one-letter code: Methylglyoxal reductase DkgB (267 aa).

Residue tyrosine 39 is the Proton donor of the active site. Histidine 97 contributes to the substrate binding site. Residue 179-231 participates in NADP(+) binding; it reads MTLAYGKALKDEVIARIAVKHNATPVQVILAWAMGEGYSVIPSSTRRENLASN.

This sequence belongs to the aldo/keto reductase family. In terms of assembly, monomer.

The protein localises to the cytoplasm. It carries out the reaction hydroxyacetone + NADP(+) = methylglyoxal + NADPH + H(+). In terms of biological role, aldo-keto reductase that significantly contributes to cellular methylglyoxal detoxification by catalyzing the NADPH-dependent conversion of methylglyoxal to acetol. The sequence is that of Methylglyoxal reductase DkgB from Salmonella typhi.